Here is a 251-residue protein sequence, read N- to C-terminus: uncharacterized protein (251 aa).

The interval 229-251 (TSTETSPEHQADLKDDNSDISST) is disordered. The span at 234–245 (SPEHQADLKDDN) shows a compositional bias: basic and acidic residues.

This is an uncharacterized protein from Acanthamoeba polyphaga (Amoeba).